The primary structure comprises 706 residues: Zinc finger and BTB domain-containing protein 17 (706 aa).

A BTB domain is found at leucine 1–valine 12. The tract at residues threonine 32–arginine 194 is disordered. The span at glutamate 67 to proline 78 shows a compositional bias: basic and acidic residues. Low complexity predominate over residues alanine 90–alanine 106. The span at glycine 134–glutamate 148 shows a compositional bias: acidic residues. Residues serine 170–glutamate 182 are compositionally biased toward polar residues. C2H2-type zinc fingers lie at residues histidine 205–histidine 227, phenylalanine 233–histidine 255, tyrosine 261–histidine 283, tyrosine 289–histidine 311, tyrosine 317–histidine 339, histidine 345–histidine 367, leucine 373–histidine 395, tyrosine 401–histidine 423, lysine 427–histidine 450, tyrosine 457–histidine 479, histidine 485–histidine 507, phenylalanine 513–histidine 536, and tyrosine 618–histidine 640. A disordered region spans residues proline 680–glutamate 706. Positions alanine 687–alanine 698 are enriched in low complexity.

This sequence belongs to the krueppel C2H2-type zinc-finger protein family.

It localises to the nucleus. Its function is as follows. Transcription factor that can function as an activator or repressor depending on its binding partners, and by targeting negative regulators of cell cycle progression. Plays a critical role in early lymphocyte development, where it is essential to prevent apoptosis in lymphoid precursors, allowing them to survive in response to IL7 and undergo proper lineage commitment. Has been shown to bind to the promoters of adenovirus major late protein and cyclin D1 and activate transcription. Required for early embryonic development during gastrulation. Represses RB1 transcription. This chain is Zinc finger and BTB domain-containing protein 17 (ZBTB17), found in Gallus gallus (Chicken).